Reading from the N-terminus, the 469-residue chain is tRNA-2-methylthio-N(6)-dimethylallyladenosine synthase (469 aa).

One can recognise an MTTase N-terminal domain in the interval 22–142 (RKVFIKTYGC…LPEALRRAKE (121 aa)). Positions 31, 67, 105, 183, 187, and 190 each coordinate [4Fe-4S] cluster. The Radical SAM core domain occupies 169-401 (RARGVTAFLT…QALLLKQQQE (233 aa)). The 63-residue stretch at 404–466 (ESCIGKEIDL…NNSLFAERAE (63 aa)) folds into the TRAM domain.

It belongs to the methylthiotransferase family. MiaB subfamily. Monomer. It depends on [4Fe-4S] cluster as a cofactor.

It localises to the cytoplasm. The enzyme catalyses N(6)-dimethylallyladenosine(37) in tRNA + (sulfur carrier)-SH + AH2 + 2 S-adenosyl-L-methionine = 2-methylsulfanyl-N(6)-dimethylallyladenosine(37) in tRNA + (sulfur carrier)-H + 5'-deoxyadenosine + L-methionine + A + S-adenosyl-L-homocysteine + 2 H(+). In terms of biological role, catalyzes the methylthiolation of N6-(dimethylallyl)adenosine (i(6)A), leading to the formation of 2-methylthio-N6-(dimethylallyl)adenosine (ms(2)i(6)A) at position 37 in tRNAs that read codons beginning with uridine. The sequence is that of tRNA-2-methylthio-N(6)-dimethylallyladenosine synthase from Rhizobium leguminosarum bv. trifolii (strain WSM2304).